A 372-amino-acid chain; its full sequence is PqqA peptide cyclase (372 aa).

Residues 4–220 (APPPLSVLLE…ETARRQLGDR (217 aa)) enclose the Radical SAM core domain. Cysteine 18, cysteine 22, and cysteine 25 together coordinate [4Fe-4S] cluster. The segment at 342–372 (ATAEQESASPAPAFIYRRPERPAAATADPLE) is disordered.

The protein belongs to the radical SAM superfamily. PqqE family. As to quaternary structure, interacts with PqqD. The interaction is necessary for activity of PqqE. [4Fe-4S] cluster serves as cofactor.

The catalysed reaction is [PQQ precursor protein] + S-adenosyl-L-methionine = E-Y cross-linked-[PQQ precursor protein] + 5'-deoxyadenosine + L-methionine + H(+). The protein operates within cofactor biosynthesis; pyrroloquinoline quinone biosynthesis. Functionally, catalyzes the cross-linking of a glutamate residue and a tyrosine residue in the PqqA protein as part of the biosynthesis of pyrroloquinoline quinone (PQQ). This Xanthomonas euvesicatoria pv. vesicatoria (strain 85-10) (Xanthomonas campestris pv. vesicatoria) protein is PqqA peptide cyclase.